Here is a 726-residue protein sequence, read N- to C-terminus: AP-1 complex subunit beta-1 (726 aa).

Belongs to the adaptor complexes large subunit family. In terms of assembly, adaptor protein complex 1 (AP-1) is a heterotetramer composed of two large adaptins (gamma-type subunit APL4 and beta-type subunit APL2), a medium adaptin (mu-type subunit APM1) and a small adaptin (sigma-type subunit APS1). Interacts with CHC1. Interacts with APM2, probably forming an alternative AP-1-like complex.

The protein resides in the cell membrane. Its subcellular location is the membrane. It localises to the coated pit. Its function is as follows. Adaptins are components of the adaptor complexes which link clathrin to receptors in coated vesicles. Clathrin-associated protein complexes are believed to interact with the cytoplasmic tails of membrane proteins, leading to their selection and concentration. The AP-1 complex interacts directly with clathrin. The sequence is that of AP-1 complex subunit beta-1 (APL2) from Saccharomyces cerevisiae (strain ATCC 204508 / S288c) (Baker's yeast).